Reading from the N-terminus, the 234-residue chain is Sugar fermentation stimulation protein homolog (234 aa).

This sequence belongs to the SfsA family.

In Shewanella sp. (strain MR-7), this protein is Sugar fermentation stimulation protein homolog.